The chain runs to 146 residues: Cytochrome c-type biogenesis protein CcmE (146 aa).

Residues 1 to 8 lie on the Cytoplasmic side of the membrane; that stretch reads MHPKRKKR. A helical; Signal-anchor for type II membrane protein transmembrane segment spans residues 9–29; it reads LLIVLAGLAVVAVASGLILNA. Topologically, residues 30–146 are periplasmic; sequence FRSNLVFFHT…IQRAGETVVQ (117 aa). Heme-binding residues include His-124 and Tyr-128.

This sequence belongs to the CcmE/CycJ family.

The protein resides in the cell inner membrane. Functionally, heme chaperone required for the biogenesis of c-type cytochromes. Transiently binds heme delivered by CcmC and transfers the heme to apo-cytochromes in a process facilitated by CcmF and CcmH. The chain is Cytochrome c-type biogenesis protein CcmE from Laribacter hongkongensis (strain HLHK9).